Here is a 306-residue protein sequence, read N- to C-terminus: D-alanine--D-alanine ligase (306 aa).

One can recognise an ATP-grasp domain in the interval 104 to 303 (KMLWKAFGLP…FEQLVVKILE (200 aa)). 134-189 (VAKLGLPLMVKPSLEGSSVGLTKVKAVEELKSAVEYALKFDNTILIEEWLAGDELT) contacts ATP. Mg(2+) contacts are provided by Asp-257, Glu-270, and Asn-272.

This sequence belongs to the D-alanine--D-alanine ligase family. Mg(2+) is required as a cofactor. Requires Mn(2+) as cofactor.

Its subcellular location is the cytoplasm. It catalyses the reaction 2 D-alanine + ATP = D-alanyl-D-alanine + ADP + phosphate + H(+). The protein operates within cell wall biogenesis; peptidoglycan biosynthesis. In terms of biological role, cell wall formation. This chain is D-alanine--D-alanine ligase, found in Haemophilus influenzae (strain PittGG).